Consider the following 115-residue polypeptide: NADH-ubiquinone oxidoreductase chain 3 (115 aa).

Helical transmembrane passes span 3 to 23 (FMLT…IAFW), 55 to 75 (FFLV…LLPL), and 84 to 104 (LEVM…SLAY).

It belongs to the complex I subunit 3 family. As to quaternary structure, core subunit of respiratory chain NADH dehydrogenase (Complex I) which is composed of 45 different subunits. Interacts with TMEM186. Interacts with TMEM242.

The protein resides in the mitochondrion inner membrane. The catalysed reaction is a ubiquinone + NADH + 5 H(+)(in) = a ubiquinol + NAD(+) + 4 H(+)(out). In terms of biological role, core subunit of the mitochondrial membrane respiratory chain NADH dehydrogenase (Complex I) which catalyzes electron transfer from NADH through the respiratory chain, using ubiquinone as an electron acceptor. Essential for the catalytic activity of complex I. This is NADH-ubiquinone oxidoreductase chain 3 from Rhinolophus pumilus (Horseshoe bat).